The chain runs to 86 residues: Latartoxin-1b (86 aa).

The first 19 residues, 1–19, serve as a signal peptide directing secretion; that stretch reads MKILVLAVVCTVLLQVALS. A propeptide spans 20 to 26 (removed in mature form); sequence ADSEEVR. The Processing quadruplet motif motif lies at 23-26; sequence EEVR. Intrachain disulfides connect cysteine 28-cysteine 43, cysteine 35-cysteine 48, cysteine 42-cysteine 65, and cysteine 50-cysteine 63.

It belongs to the neurotoxin 19 (CSTX) family. Post-translationally, contains 4 disulfide bonds. Cleavage of the propeptide depends on the processing quadruplet motif (XXXR, with at least one of X being E). Expressed by the venom gland.

It is found in the secreted. Insect toxin. The polypeptide is Latartoxin-1b (Lachesana tarabaevi (Spider)).